Reading from the N-terminus, the 411-residue chain is 2,3-bisphosphoglycerate-independent phosphoglycerate mutase (411 aa).

It belongs to the BPG-independent phosphoglycerate mutase family. A-PGAM subfamily.

It carries out the reaction (2R)-2-phosphoglycerate = (2R)-3-phosphoglycerate. Its pathway is carbohydrate degradation; glycolysis; pyruvate from D-glyceraldehyde 3-phosphate: step 3/5. Functionally, catalyzes the interconversion of 2-phosphoglycerate and 3-phosphoglycerate. The protein is 2,3-bisphosphoglycerate-independent phosphoglycerate mutase of Pyrobaculum islandicum (strain DSM 4184 / JCM 9189 / GEO3).